The primary structure comprises 164 residues: Ecotin (164 aa).

The signal sequence occupies residues 1–20 (MKMFVPAVVFAALASASAWA). A disulfide bridge connects residues C72 and C109.

It belongs to the protease inhibitor I11 (ecotin) family. As to quaternary structure, homodimer.

The protein resides in the periplasm. Functionally, general inhibitor of pancreatic serine proteases: inhibits chymotrypsin, trypsin, elastases, factor X, kallikrein as well as a variety of other proteases. This is Ecotin from Salmonella paratyphi A (strain ATCC 9150 / SARB42).